The sequence spans 510 residues: Leucine-rich repeat-containing protein 14B (510 aa).

An LRR 1; degenerate repeat occupies 100 to 137; the sequence is SNRLRVADFTGIQDVQVQQCPCGRALGRWGRTKVLART. The LRR 2; degenerate repeat unit spans residues 181–205; it reads QVCCPSLRADSLSPGQLLQVLGLAG. One copy of the LRR 4; degenerate repeat lies at 234–273; sequence FPQLTSLTLPTKAFDAPPTCAPDPEGEDLLLTSIAWELSQ. LRR repeat units lie at residues 274 to 298, 299 to 330, 331 to 349, 355 to 382, and 383 to 407; these read MNQLTELSVAFSTLTGKIQTLLSPL, KTPLRVLDLANCALNHEDISFLADCNHTAHLE, VLDLSGHNLVHLYPSTFFR, AQTLRVLTLEECNITDSHVNMMILGLSP, and CSQLQQFKFLGNPLSGSALRRLFAA.

This sequence belongs to the PRAME family. LRRC14 subfamily.

The polypeptide is Leucine-rich repeat-containing protein 14B (Mus musculus (Mouse)).